The primary structure comprises 233 residues: Large ribosomal subunit protein uL1 (233 aa).

The protein belongs to the universal ribosomal protein uL1 family. In terms of assembly, part of the 50S ribosomal subunit.

In terms of biological role, binds directly to 23S rRNA. The L1 stalk is quite mobile in the ribosome, and is involved in E site tRNA release. Protein L1 is also a translational repressor protein, it controls the translation of the L11 operon by binding to its mRNA. The polypeptide is Large ribosomal subunit protein uL1 (Photobacterium profundum (strain SS9)).